The sequence spans 566 residues: Oxygen-dependent choline dehydrogenase (566 aa).

7–36 (DYIICGAGSAGNVLATRLTEDPDVTVLLLE) is a binding site for FAD. The interval 180-202 (NGYQQEGFGPMDRTVTPKGRRAS) is disordered. The Proton acceptor role is filled by His-474.

Belongs to the GMC oxidoreductase family. FAD is required as a cofactor.

The catalysed reaction is choline + A = betaine aldehyde + AH2. The enzyme catalyses betaine aldehyde + NAD(+) + H2O = glycine betaine + NADH + 2 H(+). The protein operates within amine and polyamine biosynthesis; betaine biosynthesis via choline pathway; betaine aldehyde from choline (cytochrome c reductase route): step 1/1. Functionally, involved in the biosynthesis of the osmoprotectant glycine betaine. Catalyzes the oxidation of choline to betaine aldehyde and betaine aldehyde to glycine betaine at the same rate. This chain is Oxygen-dependent choline dehydrogenase, found in Burkholderia lata (strain ATCC 17760 / DSM 23089 / LMG 22485 / NCIMB 9086 / R18194 / 383).